Reading from the N-terminus, the 476-residue chain is Inosine-5'-monophosphate dehydrogenase (476 aa).

CBS domains are found at residues isoleucine 93 to isoleucine 151 and methionine 152 to glutamate 211. NAD(+)-binding positions include aspartate 242 and glycine 292–glycine 294. Residues glycine 294 and glycine 296 each contribute to the K(+) site. Serine 297 serves as a coordination point for IMP. Cysteine 299 provides a ligand contact to K(+). Cysteine 299 (thioimidate intermediate) is an active-site residue. Residues aspartate 334–glycine 336, glycine 357–tyrosine 358, and tyrosine 381–glycine 385 each bind IMP. The active-site Proton acceptor is the arginine 398. Glutamate 408 provides a ligand contact to IMP. Glutamate 462 lines the K(+) pocket.

The protein belongs to the IMPDH/GMPR family. In terms of assembly, homotetramer. Requires K(+) as cofactor.

It carries out the reaction IMP + NAD(+) + H2O = XMP + NADH + H(+). It functions in the pathway purine metabolism; XMP biosynthesis via de novo pathway; XMP from IMP: step 1/1. Its activity is regulated as follows. Mycophenolic acid (MPA) is a non-competitive inhibitor that prevents formation of the closed enzyme conformation by binding to the same site as the amobile flap. In contrast, mizoribine monophosphate (MZP) is a competitive inhibitor that induces the closed conformation. MPA is a potent inhibitor of mammalian IMPDHs but a poor inhibitor of the bacterial enzymes. MZP is a more potent inhibitor of bacterial IMPDH. Its function is as follows. Catalyzes the conversion of inosine 5'-phosphate (IMP) to xanthosine 5'-phosphate (XMP), the first committed and rate-limiting step in the de novo synthesis of guanine nucleotides, and therefore plays an important role in the regulation of cell growth. This Korarchaeum cryptofilum (strain OPF8) protein is Inosine-5'-monophosphate dehydrogenase.